We begin with the raw amino-acid sequence, 570 residues long: Protein translocase subunit SecD (570 aa).

Polar residues predominate over residues 104–117; it reads GANATGTPSASETG. Residues 104–198 are disordered; sequence GANATGTPSA…SASASGDDAT (95 aa). The span at 122 to 146 shows a compositional bias: basic and acidic residues; the sequence is KATDKATDKATDKATDGDKATDGDK. 2 stretches are compositionally biased toward low complexity: residues 147 to 161 and 172 to 196; these read ASGTPSDSASASATS and ADPSPSATSSDGASPSPSASASGDD. 5 helical membrane passes run 370 to 390, 395 to 415, 419 to 439, 474 to 494, and 498 to 518; these read AGLIAGAIGLALVVLYLLFYY, FIAVCSLLVSAGLTYVIMALL, IGFALNLPAVCGAIVAIGITA, ILVSDFVSFLAAAVLFIVTVG, and GFAFTLGLTTLLDVVVVFLFT. The segment at 540 to 570 is disordered; it reads LDPKALGAKPPLRRTRRPSRPAAGPVDPKEA.

The protein belongs to the SecD/SecF family. SecD subfamily. Forms a complex with SecF. Part of the essential Sec protein translocation apparatus which comprises SecA, SecYEG and auxiliary proteins SecDF. Other proteins may also be involved.

The protein localises to the cell membrane. Its function is as follows. Part of the Sec protein translocase complex. Interacts with the SecYEG preprotein conducting channel. SecDF uses the proton motive force (PMF) to complete protein translocation after the ATP-dependent function of SecA. This is Protein translocase subunit SecD from Streptomyces coelicolor (strain ATCC BAA-471 / A3(2) / M145).